A 1543-amino-acid polypeptide reads, in one-letter code: MNKMALASFMKGRTVIGTPDEETMDIELPKKYHEMVGVIFSDTFSYRLKFNWGYRIPVIKEHSEYTEHCWAMHGEIFCYLAKYWLKGFVAFQAAINAAIIEVTTNHSVMEELTSVIGINMKIPPFISKGEIMNEWFHFTCLVSFSSFIYFASLNVARERGKFKKLMTVMGLRESAFWLSWGLTYICFIFIMSIFMALVITSIPIVFHTGFMVIFTLYSLYGLSLIALAFLMSVLIRKPMLAGLAGFLFTVFWGCLGFTVLYRQLPLSLGWVLSLLSPFAFTAGMAQITHLDNYLSGVIFPDPSGDSYKMIATFFILAFDTLFYLIFTLYFERVLPDKDGHGDSPLFFLKSSFWSKHQNTHHEIFENEINPEHSSDDSFEPVSPEFHGKEAIRIRNVIKEYNGKTGKVEALQGIFFDIYEGQITAILGHNGAGKSTLLNILSGLSVSTEGSATIYNTQLSEITDMEEIRKNIGFCPQFNFQFDFLTVRENLRVFAKIKGIQPKEVEQEVKRIIMELDMQSIQDIIAKKLSGGQKRKLTLGIAILGDPQVLLLDEPTAGLDPFSRHRVWSLLKEHKVDRLILFSTQFMDEADILADRKVFLSNGKLKCAGSSLFLKRKWGIGYHLSLHRNEMCDTEKITSLIKQHIPDAKLTTESEEKLVYSLPLEKTNKFPDLYSDLDKCSDQGIRNYAVSVTSLNEVFLNLEGKSAIDEPDFDIGKQEKIHVTRNTGDESEMEQVLCSLPETRKAVSSAALWRRQIYAVATLRFLKLRRERRALLCLLLVLGIAFIPIILEKIMYKVTRETHCWEFSPSMYFLSLEQIPKTPLTSLLIVNNTGSNIEDLVHSLKCQDIVLEIDDFRNRNGSDDPSYNGAIIVSGDQKDYRFSVACNTKKLNCFPVLMGIVSNALMGIFNFTELIQMESTSFSRDDIVLDLGFIDGSIFLLLITNCVSPFIGMSSISDYKKNVQSQLWISGLWPSAYWCGQALVDIPLYFLILFSIHLIYYFIFLGFQLSWELMFVLVVCIIGCAVSLIFLTYVLSFIFRKWRKNNGFWSFGFFIILICVSTIMVSTQYEKLNLILCMIFIPSFTLLGYVMLLIQLDFMRNLDSLDNRINEVNKTILLTTLIPYLQSVIFLFVIRCLEMKYGNEIMNKDPVFRISPRSRETHPNPEEPEEEDEDVQAERVQAANALTAPNLEEEPVITASCLHKEYYETKKSCFSTRKKKIAIRNVSFCVKKGEVLGLLGHNGAGKSTSIKMITGCTKPTAGVVVLQGSRASVRQQHDNSLKFLGYCPQENSLWPKLTMKEHLELYAAVKGLGKEDAALSISRLVEALKLQEQLKAPVKTLSEGIKRKLCFVLSILGNPSVVLLDEPFTGMDPEGQQQMWQILQATVKNKERGTLLTTHYMSEAEAVCDRMAMMVSGTLRCIGSIQHLKNKFGRDYLLEIKMKEPTQVEALHTEILKLFPQAAWQERYSSLMAYKLPVEDVHPLSRAFFKLEAMKQTFNLEEYSLSQATLEQVFLELCKEQELGNVDDKIDTTVEWKLLPQEDP.

7 consecutive transmembrane segments (helical) span residues 83–103, 135–155, 185–205, 210–230, 240–260, 264–284, and 310–330; these read YWLK…IEVT, WFHF…SLNV, ICFI…IPIV, FMVI…LAFL, LAGL…FTVL, LPLS…TAGM, and IATF…TLYF. The ABC transporter 1 domain maps to 391–626; that stretch reads IRIRNVIKEY…WGIGYHLSLH (236 aa). Residue 427–434 participates in ATP binding; sequence GHNGAGKS. A run of 8 helical transmembrane segments spans residues 774-794, 890-910, 926-946, 985-1005, 1014-1034, 1046-1066, 1073-1093, and 1113-1133; these read LLCL…EKIM, LNCF…IFNF, IVLD…TNCV, IPLY…IFLG, FVLV…TYVL, GFWS…MVST, LILC…MLLI, and KTIL…LFVI. A compositionally biased stretch (basic and acidic residues) spans 1153 to 1164; it reads ISPRSRETHPNP. The segment at 1153 to 1177 is disordered; the sequence is ISPRSRETHPNPEEPEEEDEDVQAE. Over residues 1165–1174 the composition is skewed to acidic residues; it reads EEPEEEDEDV. The ABC transporter 2 domain maps to 1206 to 1440; sequence YETKKSCFST…FGRDYLLEIK (235 aa). 1239-1246 is an ATP binding site; that stretch reads GHNGAGKS.

It belongs to the ABC transporter superfamily. ABCA family. In terms of tissue distribution, widely expressed. Highly expressed in skeletal muscle, heart, brain and gastrointestinal tract.

The protein localises to the membrane. In terms of biological role, probable transporter which may play a role in macrophage lipid transport and homeostasis. The protein is ATP-binding cassette sub-family A member 10 (ABCA10) of Homo sapiens (Human).